The following is a 217-amino-acid chain: Protein-L-isoaspartate O-methyltransferase (217 aa).

Ser67 is an active-site residue.

It belongs to the methyltransferase superfamily. L-isoaspartyl/D-aspartyl protein methyltransferase family.

Its subcellular location is the cytoplasm. It carries out the reaction [protein]-L-isoaspartate + S-adenosyl-L-methionine = [protein]-L-isoaspartate alpha-methyl ester + S-adenosyl-L-homocysteine. Functionally, catalyzes the methyl esterification of L-isoaspartyl residues in peptides and proteins that result from spontaneous decomposition of normal L-aspartyl and L-asparaginyl residues. It plays a role in the repair and/or degradation of damaged proteins. The chain is Protein-L-isoaspartate O-methyltransferase from Azoarcus sp. (strain BH72).